A 308-amino-acid chain; its full sequence is Transaldolase (308 aa).

Residue Lys-125 is the Schiff-base intermediate with substrate of the active site.

Belongs to the transaldolase family. Type 1 subfamily. Homodimer.

The protein localises to the cytoplasm. The enzyme catalyses D-sedoheptulose 7-phosphate + D-glyceraldehyde 3-phosphate = D-erythrose 4-phosphate + beta-D-fructose 6-phosphate. Its pathway is carbohydrate degradation; pentose phosphate pathway; D-glyceraldehyde 3-phosphate and beta-D-fructose 6-phosphate from D-ribose 5-phosphate and D-xylulose 5-phosphate (non-oxidative stage): step 2/3. In terms of biological role, transaldolase is important for the balance of metabolites in the pentose-phosphate pathway. This chain is Transaldolase, found in Ectopseudomonas mendocina (strain ymp) (Pseudomonas mendocina).